The sequence spans 589 residues: Mitogen-activated protein kinase 8 (589 aa).

The interval 18–56 (RPSSSSSSSSSNNNNNNHEQPIFNSSSFSSSSNPNHSAN) is disordered. Low complexity-rich tracts occupy residues 20–34 (SSSSSSSSSNNNNNN) and 41–56 (NSSSFSSSSNPNHSAN). The Protein kinase domain maps to 104-395 (YQIQEVVGKG…AEDALADPYF (292 aa)). Residues 110-118 (VGKGSYGVV) and Lys-133 each bind ATP. Asp-230 functions as the Proton acceptor in the catalytic mechanism. Thr-266 carries the phosphothreonine modification. The TXY signature appears at 266-268 (TDY). Residue Tyr-268 is modified to Phosphotyrosine. At Thr-271 the chain carries Phosphothreonine. Positions 474–589 (NQGKPGAAGG…TDKVASLHNS (116 aa)) are disordered.

This sequence belongs to the protein kinase superfamily. CMGC Ser/Thr protein kinase family. MAP kinase subfamily. In terms of assembly, interacts with CAM3, CAM4 and CAM7 in an calcium-dependent manner. Post-translationally, dually phosphorylated on Thr-266 and Tyr-268, which activates the enzyme. Autophosphorylated. As to expression, ubiquitous.

It catalyses the reaction L-seryl-[protein] + ATP = O-phospho-L-seryl-[protein] + ADP + H(+). It carries out the reaction L-threonyl-[protein] + ATP = O-phospho-L-threonyl-[protein] + ADP + H(+). Activated by threonine and tyrosine phosphorylation. Activated by two independent mechanisms, the binding of CAMs in a calcium-dependent manner and the phosphorylation by MAP kinase kinase MKK3. Activated in response to mechanical wounding, hydrogen peroxide and jasmonic acid (JA). Functionally, MKK3-MPK8 and CAMs-MPK8 modules negatively regulates ROS accumulation through controlling expression of the RBOHD gene during wounding. The protein is Mitogen-activated protein kinase 8 (MPK8) of Arabidopsis thaliana (Mouse-ear cress).